Consider the following 561-residue polypeptide: DNA ligase B (561 aa).

The active-site N6-AMP-lysine intermediate is the lysine 125.

Belongs to the NAD-dependent DNA ligase family. LigB subfamily.

It catalyses the reaction NAD(+) + (deoxyribonucleotide)n-3'-hydroxyl + 5'-phospho-(deoxyribonucleotide)m = (deoxyribonucleotide)n+m + AMP + beta-nicotinamide D-nucleotide.. Functionally, catalyzes the formation of phosphodiester linkages between 5'-phosphoryl and 3'-hydroxyl groups in double-stranded DNA using NAD as a coenzyme and as the energy source for the reaction. The polypeptide is DNA ligase B (Salmonella choleraesuis (strain SC-B67)).